A 507-amino-acid polypeptide reads, in one-letter code: Dolichyl pyrophosphate Man9GlcNAc2 alpha-1,3-glucosyltransferase (507 aa).

At 1 to 2 (ME) the chain is on the cytoplasmic side. A helical transmembrane segment spans residues 3–23 (SWTWMTVVVLLGLTVRWTVSL). Over 24–114 (NSYSGAGKPP…SQAHKLFMRT (91 aa)) the chain is Lumenal. A glycan (N-linked (GlcNAc...) asparagine) is linked at asparagine 59. A helical membrane pass occupies residues 115–135 (TVLAADLLIYIPAVLLYCYSL). The Cytoplasmic segment spans residues 136 to 143 (KEISPKRK). A helical membrane pass occupies residues 144-164 (IASALCILLYPGLILIDYGHF). The Lumenal segment spans residues 165-172 (QYNSVSLG). A helical membrane pass occupies residues 173–193 (FALWGVLGVSCDWDLLGSLAF). At 194–229 (CLALNYKQMELYHSLPFFCFLLGKCFKKGLRGKGSA) the chain is on the cytoplasmic side. A helical transmembrane segment spans residues 230–250 (LFIRIACTVVASFLLCWLPFL). Residues 251 to 297 (TEREHALQVVRRLFPVDRGLFEDKVANIWCSLNVFLKIKDILPRHIQ) lie on the Lumenal side of the membrane. A helical membrane pass occupies residues 298-318 (IAISFCFTFLSLLPACIKLTV). Over 319–332 (QPSAKGFRFTLVSC) the chain is Cytoplasmic. A helical membrane pass occupies residues 333 to 353 (ALSFFLFSFQVHEKSILLVSL). Residues 354–361 (PVCLVLTE) are Lumenal-facing. A helical transmembrane segment spans residues 362 to 382 (IPFMSTWFLLVSTFSMLPLLL). Over 383–385 (KDQ) the chain is Cytoplasmic. A helical membrane pass occupies residues 386 to 406 (LLLPSVVTVMAFLIACSTFFP). Residues 407–437 (MFENTSEEQLQLKSFAVSVRRHLPGFTFLPR) are Lumenal-facing. Residues 438–458 (IIQCLFLSSVITMILLTILSV) traverse the membrane as a helical segment. The Cytoplasmic portion of the chain corresponds to 459–468 (TLDPPQKLPD). The helical transmembrane segment at 469-489 (LFSVLICFVSCVNFVFFLVYF) threads the bilayer. Over 490–507 (NIVIMWDSKNGRNRKKID) the chain is Lumenal.

It belongs to the ALG6/ALG8 glucosyltransferase family.

The protein resides in the endoplasmic reticulum membrane. It carries out the reaction an alpha-D-Man-(1-&gt;2)-alpha-D-Man-(1-&gt;2)-alpha-D-Man-(1-&gt;3)-[alpha-D-Man-(1-&gt;2)-alpha-D-Man-(1-&gt;3)-[alpha-D-Man-(1-&gt;2)-alpha-D-Man-(1-&gt;6)]-alpha-D-Man-(1-&gt;6)]-beta-D-Man-(1-&gt;4)-beta-D-GlcNAc-(1-&gt;4)-alpha-D-GlcNAc-diphospho-di-trans,poly-cis-dolichol + a di-trans,poly-cis-dolichyl beta-D-glucosyl phosphate = an alpha-D-Glc-(1-&gt;3)-alpha-D-Man-(1-&gt;2)-alpha-D-Man-(1-&gt;2)-alpha-D-Man-(1-&gt;3)-[alpha-D-Man-(1-&gt;2)-alpha-D-Man-(1-&gt;3)-[alpha-D-Man-(1-&gt;2)-alpha-D-Man-(1-&gt;6)]-alpha-D-Man-(1-&gt;6)]-beta-D-Man-(1-&gt;4)-beta-D-GlcNAc-(1-&gt;4)-alpha-D-GlcNAc-diphospho-di-trans,poly-cis-dolichol + a di-trans,poly-cis-dolichyl phosphate + H(+). Its pathway is protein modification; protein glycosylation. In terms of biological role, dolichyl pyrophosphate Man9GlcNAc2 alpha-1,3-glucosyltransferase that operates in the biosynthetic pathway of dolichol-linked oligosaccharides, the glycan precursors employed in protein asparagine (N)-glycosylation. The assembly of dolichol-linked oligosaccharides begins on the cytosolic side of the endoplasmic reticulum membrane and finishes in its lumen. The sequential addition of sugars to dolichol pyrophosphate produces dolichol-linked oligosaccharides containing fourteen sugars, including two GlcNAcs, nine mannoses and three glucoses. Once assembled, the oligosaccharide is transferred from the lipid to nascent proteins by oligosaccharyltransferases. In the lumen of the endoplasmic reticulum, adds the first glucose residue from dolichyl phosphate glucose (Dol-P-Glc) onto the lipid-linked oligosaccharide intermediate Man(9)GlcNAc(2)-PP-Dol to produce Glc(1)Man(9)GlcNAc(2)-PP-Dol. Glc(1)Man(9)GlcNAc(2)-PP-Dol is a substrate for ALG8, the following enzyme in the biosynthetic pathway. The sequence is that of Dolichyl pyrophosphate Man9GlcNAc2 alpha-1,3-glucosyltransferase from Rattus norvegicus (Rat).